Consider the following 829-residue polypeptide: Venom phosphodiesterase CdcPDE (829 aa).

SMB domains follow at residues 8–51 (PQVS…VLPT) and 52–96 (QSWS…GETS). Intrachain disulfides connect C12-C16, C12-C29, C16-C47, C27-C29, C27-C40, C33-C39, C40-C47, C56-C61, C56-C73, C61-C91, C71-C73, C71-C84, C77-C83, C84-C91, C102-C148, and C110-C322. N17 carries N-linked (GlcNAc...) asparagine glycosylation. The Cell attachment site motif lies at 36-38 (RQA). Positions 125 and 163 each coordinate a divalent metal cation. T163 serves as the catalytic AMP-threonine intermediate. N194 and N237 each carry an N-linked (GlcNAc...) asparagine glycan. Position 249 (K249) interacts with AMP. A divalent metal cation is bound by residues D283, H287, D330, and H331. H287 lines the AMP pocket. Intrachain disulfides connect C338-C435, C386-C771, C519-C577, C532-C632, C534-C617, and C740-C750. The N-linked (GlcNAc...) asparagine glycan is linked to N383. H440 contacts a divalent metal cation. 2 N-linked (GlcNAc...) asparagine glycosylation sites follow: N572 and N652.

Belongs to the nucleotide pyrophosphatase/phosphodiesterase family. As to quaternary structure, monomer. A divalent metal cation is required as a cofactor. Post-translationally, N-glycosylated. Glycosylation counts for an increased mass of ~9%. In terms of processing, contains 16 disulfide bonds. In terms of tissue distribution, expressed by venom gland.

Its subcellular location is the secreted. It carries out the reaction ADP + H2O = AMP + phosphate + H(+). In terms of biological role, hydrolyzes ADP with high activity. Shows weak or no activity on 5'-AMP, 5'-GMP, 3'-AMP, ATP, cAMP, and cGMP. Is devoid of monophosphatase and proteinase activities. Inhibits ADP-induced platelet aggregation and is cytotoxic to human keratinocytes. Kinetic parameters indicated a higher affinity for the substrate bis(p-nitrophenyl) phosphate compared to others snake venom PDEs. Is recognized by the crotalid antivenom produced by the Instituto Butantan. In Crotalus durissus collilineatus (Brazilian rattlesnake), this protein is Venom phosphodiesterase CdcPDE.